The primary structure comprises 88 residues: MAHKKGQGSTQNNRDSAGRRLGVKKFGSEFVRAGNIIVRQRGTKMHPGNNVGMGKDHTLYALTDGVVKFEYKDKSRKKVSVISQNFGE.

Residues 1–21 (MAHKKGQGSTQNNRDSAGRRL) are disordered.

It belongs to the bacterial ribosomal protein bL27 family.

In Helicobacter acinonychis (strain Sheeba), this protein is Large ribosomal subunit protein bL27.